Consider the following 185-residue polypeptide: Ribosome-recycling factor (185 aa).

This sequence belongs to the RRF family.

The protein localises to the cytoplasm. Responsible for the release of ribosomes from messenger RNA at the termination of protein biosynthesis. May increase the efficiency of translation by recycling ribosomes from one round of translation to another. The polypeptide is Ribosome-recycling factor (Xanthomonas campestris pv. campestris (strain 8004)).